Consider the following 119-residue polypeptide: Protein TusC (119 aa).

Belongs to the DsrF/TusC family. In terms of assembly, heterohexamer, formed by a dimer of trimers. The hexameric TusBCD complex contains 2 copies each of TusB, TusC and TusD. The TusBCD complex interacts with TusE.

It localises to the cytoplasm. Functionally, part of a sulfur-relay system required for 2-thiolation of 5-methylaminomethyl-2-thiouridine (mnm(5)s(2)U) at tRNA wobble positions. The protein is Protein TusC of Shigella boydii serotype 18 (strain CDC 3083-94 / BS512).